Here is a 191-residue protein sequence, read N- to C-terminus: UPF0312 protein Sbal_3041 (191 aa).

The N-terminal stretch at methionine 1 to alanine 22 is a signal peptide.

It belongs to the UPF0312 family. Type 1 subfamily.

It localises to the periplasm. The polypeptide is UPF0312 protein Sbal_3041 (Shewanella baltica (strain OS155 / ATCC BAA-1091)).